Reading from the N-terminus, the 304-residue chain is Granaticin polyketide synthase bifunctional cyclase/dehydratase (304 aa).

It functions in the pathway antifungal biosynthesis; monensin biosynthesis. In terms of biological role, is needed for correct cyclization of the oligoketide leading to isochromanequinone formation. The sequence is that of Granaticin polyketide synthase bifunctional cyclase/dehydratase from Streptomyces virginiae (Streptomyces cinnamonensis).